The chain runs to 188 residues: Probable nicotinate-nucleotide adenylyltransferase (188 aa).

This sequence belongs to the NadD family.

It catalyses the reaction nicotinate beta-D-ribonucleotide + ATP + H(+) = deamido-NAD(+) + diphosphate. It functions in the pathway cofactor biosynthesis; NAD(+) biosynthesis; deamido-NAD(+) from nicotinate D-ribonucleotide: step 1/1. Catalyzes the reversible adenylation of nicotinate mononucleotide (NaMN) to nicotinic acid adenine dinucleotide (NaAD). This chain is Probable nicotinate-nucleotide adenylyltransferase, found in Listeria monocytogenes serotype 4a (strain HCC23).